Reading from the N-terminus, the 98-residue chain is Acylphosphatase (98 aa).

One can recognise an Acylphosphatase-like domain in the interval 10-96 (ARLLRIRGRV…TDGAGFDCLP (87 aa)). Catalysis depends on residues Arg25 and Asn43.

This sequence belongs to the acylphosphatase family.

It carries out the reaction an acyl phosphate + H2O = a carboxylate + phosphate + H(+). The polypeptide is Acylphosphatase (acyP) (Azoarcus sp. (strain BH72)).